The sequence spans 462 residues: L-seryl-tRNA(Sec) selenium transferase (462 aa).

N6-(pyridoxal phosphate)lysine is present on K293.

The protein belongs to the SelA family. Pyridoxal 5'-phosphate serves as cofactor.

It localises to the cytoplasm. The enzyme catalyses L-seryl-tRNA(Sec) + selenophosphate + H(+) = L-selenocysteinyl-tRNA(Sec) + phosphate. The protein operates within aminoacyl-tRNA biosynthesis; selenocysteinyl-tRNA(Sec) biosynthesis; selenocysteinyl-tRNA(Sec) from L-seryl-tRNA(Sec) (bacterial route): step 1/1. Functionally, converts seryl-tRNA(Sec) to selenocysteinyl-tRNA(Sec) required for selenoprotein biosynthesis. This is L-seryl-tRNA(Sec) selenium transferase from Clostridium botulinum (strain Okra / Type B1).